The following is a 1130-amino-acid chain: Transmembrane channel-like protein 3 (1130 aa).

At 1-148 (MKTSKASQRY…ASYFIFLRWL (148 aa)) the chain is on the cytoplasmic side. Residues 149–169 (FGINIVLTVMTGAFVVLPELI) form a helical membrane-spanning segment. Residues 170-192 (AGQPFGSTASKTIPREQITSAQD) are Extracellular-facing. A helical membrane pass occupies residues 193 to 213 (LDTVWSLGGYLQYSVLFYGYY). Topologically, residues 214–225 (GRERRIGRAGYR) are cytoplasmic. Residues 226–246 (LPLAYFLVGMAVFAYSFIVLL) traverse the membrane as a helical segment. Topologically, residues 247 to 319 (KRMAKNSRTS…KNMAVTVCLR (73 aa)) are extracellular. N-linked (GlcNAc...) asparagine glycosylation occurs at Asn264. A helical transmembrane segment spans residues 320 to 340 (IIANILVLLSLAGSIYLIYFV). Residues 341–361 (VDRSQKLEQSKKELTLWEKNE) lie on the Cytoplasmic side of the membrane. A helical transmembrane segment spans residues 362 to 382 (VSVVVSLVTMLAPSAFDLIAA). Over 383 to 393 (LEMYHPRTTLR) the chain is Extracellular. Residues 394-414 (FQLARVLVLYLGNLYSLIIAL) traverse the membrane as a helical segment. Residues 415-509 (LDKVNSMNIE…CWETYVGQEM (95 aa)) lie on the Cytoplasmic side of the membrane. Residues 510 to 530 (LKLSVIDMLFTVASILLIDFF) form a helical membrane-spanning segment. The Extracellular segment spans residues 531-570 (RGLFVRYLSDYWCWDLESKFPEYGEFKIAENVLHLVYNQG). Residues 571–591 (MIWMGAFFSPCLPAFNVLKLI) traverse the membrane as a helical segment. The Cytoplasmic segment spans residues 592 to 619 (GLMYLRSWAVLTCNVPHQQVFRASRSNN). The helical transmembrane segment at 620–640 (FYLAMLLFMLFLCMLPTIFAI) threads the bilayer. Residues 641–680 (VHYKPSLNCGPFSGQEKIYDIVSETIENDFPTWFHAVVGH) are Extracellular-facing. The chain crosses the membrane as a helical span at residues 681–701 (ISSPVVILPAVLLLFMLIYYL). The Cytoplasmic portion of the chain corresponds to 702–1130 (QSIARSLKLS…DLNDLICSNV (429 aa)). 5 disordered regions span residues 742-774 (DARQAGSATEAESSENSKPKTLQARIQTHEESS), 819-893 (RSLP…FQPI), 999-1019 (SSCFYTGDRSENNTRDPKYQR), 1033-1059 (QLERPTFVHRKPRSRNGQYPQHALKAR), and 1097-1116 (QGRFPRSASQLGRRKAKSRQ). Over residues 747-767 (GSATEAESSENSKPKTLQARI) the composition is skewed to polar residues. Residues 840–850 (SRSRPEQDTNR) are compositionally biased toward basic and acidic residues. Residues 856 to 876 (CSSTSNLHKNRSCSSVTQTQP) are compositionally biased toward polar residues. 2 stretches are compositionally biased toward basic and acidic residues: residues 878–890 (KDVRSEPLSRKDF) and 1006–1017 (DRSENNTRDPKY). Over residues 1097-1106 (QGRFPRSASQ) the composition is skewed to polar residues.

This sequence belongs to the TMC family. Detected in most neuronal organs and also in some non-neuronal tissues.

It localises to the membrane. Functionally, probable component of an ion channel. Molecular function hasn't been characterized yet. This chain is Transmembrane channel-like protein 3, found in Mus musculus (Mouse).